Consider the following 198-residue polypeptide: A-type ATP synthase subunit E (198 aa).

This sequence belongs to the V-ATPase E subunit family. Has multiple subunits with at least A(3), B(3), C, D, E, F, H, I and proteolipid K(x).

The protein resides in the cell membrane. Functionally, component of the A-type ATP synthase that produces ATP from ADP in the presence of a proton gradient across the membrane. This chain is A-type ATP synthase subunit E, found in Pyrococcus furiosus (strain ATCC 43587 / DSM 3638 / JCM 8422 / Vc1).